Reading from the N-terminus, the 439-residue chain is Ribosomal protein uS12 methylthiotransferase RimO (439 aa).

The MTTase N-terminal domain maps to 2–114; that stretch reads SKLYLMSLGC…VDEMILKKTN (113 aa). Residues C11, C45, C77, C146, C150, and C153 each contribute to the [4Fe-4S] cluster site. Residues 132 to 363 form the Radical SAM core domain; sequence TGSNSHAFIK…VNEVIEKSFE (232 aa).

The protein belongs to the methylthiotransferase family. RimO subfamily. The cofactor is [4Fe-4S] cluster.

It localises to the cytoplasm. The catalysed reaction is L-aspartate(89)-[ribosomal protein uS12]-hydrogen + (sulfur carrier)-SH + AH2 + 2 S-adenosyl-L-methionine = 3-methylsulfanyl-L-aspartate(89)-[ribosomal protein uS12]-hydrogen + (sulfur carrier)-H + 5'-deoxyadenosine + L-methionine + A + S-adenosyl-L-homocysteine + 2 H(+). In terms of biological role, catalyzes the methylthiolation of an aspartic acid residue of ribosomal protein uS12. The protein is Ribosomal protein uS12 methylthiotransferase RimO of Campylobacter jejuni (strain RM1221).